Reading from the N-terminus, the 796-residue chain is Kinesin-like protein KIF3C (796 aa).

The region spanning 10 to 367 (ALKVVARCRP…LRFANRAKNI (358 aa)) is the Kinesin motor domain. 97 to 104 (GQTGTGKT) contributes to the ATP binding site. Disordered stretches follow at residues 252 to 292 (RQNK…PKEA), 397 to 422 (EKKG…APAG), and 758 to 796 (KVRK…VDHD). Residues 256 to 269 (AGPNAAGGPATQPT) are compositionally biased toward low complexity. A coiled-coil region spans residues 378 to 632 (KDTLLREFQE…NEQTRELKLK (255 aa)). Basic residues predominate over residues 401 to 416 (MLGKRPRRKSSRRKKA). Residues 633 to 793 (YLIIENFIPP…SVPLHPATVV (161 aa)) form a globular region.

The protein belongs to the TRAFAC class myosin-kinesin ATPase superfamily. Kinesin family. Kinesin II subfamily. In terms of assembly, heterodimer of KIF3A and KIF3C.

It localises to the cytoplasm. Its subcellular location is the cytoskeleton. In terms of biological role, microtubule-based anterograde translocator for membranous organelles. The sequence is that of Kinesin-like protein KIF3C (Kif3c) from Mus musculus (Mouse).